The chain runs to 215 residues: Transcription elongation factor A protein-like 4 (215 aa).

Position 1 is an N-acetylmethionine (methionine 1). The segment at 1–133 (MEKLYSENEG…RKAKRKTNKG (133 aa)) is disordered. Phosphoserine is present on residues serine 6, serine 88, and serine 102. Basic and acidic residues predominate over residues 25 to 102 (QDERKPEVTC…KPEIEGKPES (78 aa)).

The protein belongs to the TFS-II family. TFA subfamily.

It is found in the nucleus. In terms of biological role, may be involved in transcriptional regulation. In Homo sapiens (Human), this protein is Transcription elongation factor A protein-like 4 (TCEAL4).